Here is a 56-residue protein sequence, read N- to C-terminus: Large ribosomal subunit protein bL32 (56 aa).

The segment at 1–26 is disordered; it reads MAVQQNKKSRSKRGMRRSHDALSTAQ. Residues 7-16 show a composition bias toward basic residues; it reads KKSRSKRGMR.

Belongs to the bacterial ribosomal protein bL32 family.

This is Large ribosomal subunit protein bL32 from Shewanella denitrificans (strain OS217 / ATCC BAA-1090 / DSM 15013).